Reading from the N-terminus, the 141-residue chain is Putative pre-16S rRNA nuclease (141 aa).

This sequence belongs to the YqgF nuclease family.

It localises to the cytoplasm. Could be a nuclease involved in processing of the 5'-end of pre-16S rRNA. The sequence is that of Putative pre-16S rRNA nuclease from Aliivibrio fischeri (strain MJ11) (Vibrio fischeri).